A 147-amino-acid chain; its full sequence is Hemoglobin subunit gamma (147 aa).

A Globin domain is found at 3–147; it reads HFTAEEKAVI…VAIALAHKYH (145 aa). Heme b is bound by residues His-64 and His-93.

The protein belongs to the globin family. As to quaternary structure, heterotetramer of two alpha chains and two gamma chains in fetal hemoglobin (Hb F). As to expression, red blood cells.

Functionally, gamma chains make up the fetal hemoglobin F, in combination with alpha chains. This is Hemoglobin subunit gamma (HBG) from Eulemur fulvus fulvus (Brown lemur).